The sequence spans 224 residues: Ribonuclease HII (224 aa).

In terms of domain architecture, RNase H type-2 spans 1-210; that stretch reads MKVAGADEAG…AKKIEEKFKR (210 aa). Asp-7, Glu-8, and Asp-105 together coordinate a divalent metal cation.

The protein belongs to the RNase HII family. Mn(2+) serves as cofactor. Requires Mg(2+) as cofactor.

The protein localises to the cytoplasm. The enzyme catalyses Endonucleolytic cleavage to 5'-phosphomonoester.. In terms of biological role, endonuclease that specifically degrades the RNA of RNA-DNA hybrids. The chain is Ribonuclease HII (rnhB) from Pyrococcus abyssi (strain GE5 / Orsay).